We begin with the raw amino-acid sequence, 470 residues long: Uronate isomerase (470 aa).

Belongs to the metallo-dependent hydrolases superfamily. Uronate isomerase family.

The catalysed reaction is D-glucuronate = D-fructuronate. The enzyme catalyses aldehydo-D-galacturonate = keto-D-tagaturonate. The protein operates within carbohydrate metabolism; pentose and glucuronate interconversion. The chain is Uronate isomerase from Serratia proteamaculans (strain 568).